The primary structure comprises 169 residues: uncharacterized protein (169 aa).

This is an uncharacterized protein from Haemophilus influenzae (strain ATCC 51907 / DSM 11121 / KW20 / Rd).